A 171-amino-acid chain; its full sequence is Large ribosomal subunit protein uL10 (171 aa).

This sequence belongs to the universal ribosomal protein uL10 family. In terms of assembly, part of the ribosomal stalk of the 50S ribosomal subunit. The N-terminus interacts with L11 and the large rRNA to form the base of the stalk. The C-terminus forms an elongated spine to which L12 dimers bind in a sequential fashion forming a multimeric L10(L12)X complex.

Forms part of the ribosomal stalk, playing a central role in the interaction of the ribosome with GTP-bound translation factors. The polypeptide is Large ribosomal subunit protein uL10 (Phenylobacterium zucineum (strain HLK1)).